The chain runs to 939 residues: Isoleucine--tRNA ligase (939 aa).

Residues 58 to 68 (PYANGNIHIGH) carry the 'HIGH' region motif. Residue Glu562 participates in L-isoleucyl-5'-AMP binding. Residues 603–607 (KMSKS) carry the 'KMSKS' region motif. Lys606 serves as a coordination point for ATP. Residues Cys903, Cys906, Cys922, and Cys925 each coordinate Zn(2+).

Belongs to the class-I aminoacyl-tRNA synthetase family. IleS type 1 subfamily. Monomer. The cofactor is Zn(2+).

It localises to the cytoplasm. The catalysed reaction is tRNA(Ile) + L-isoleucine + ATP = L-isoleucyl-tRNA(Ile) + AMP + diphosphate. Functionally, catalyzes the attachment of isoleucine to tRNA(Ile). As IleRS can inadvertently accommodate and process structurally similar amino acids such as valine, to avoid such errors it has two additional distinct tRNA(Ile)-dependent editing activities. One activity is designated as 'pretransfer' editing and involves the hydrolysis of activated Val-AMP. The other activity is designated 'posttransfer' editing and involves deacylation of mischarged Val-tRNA(Ile). In Buchnera aphidicola subsp. Baizongia pistaciae (strain Bp), this protein is Isoleucine--tRNA ligase.